The chain runs to 465 residues: Cruciferin CRU4 (465 aa).

The N-terminal stretch at 1 to 22 is a signal peptide; sequence MGPTSLLSFFFTFLTLFHGFTA. 2 disulfide bridges follow: C29-C62 and C105-C283. Cupin type-1 domains follow at residues 34 to 236 and 289 to 438; these read LNAL…ETAQ and ENLD…QEAR. At T108 the chain carries Phosphothreonine. A disordered region spans residues 112–135; sequence SPVFGQGQGQEQGQGQGQGQGQGF. Positions 117–133 are enriched in gly residues; sequence QGQGQEQGQGQGQGQGQ. Phosphotyrosine is present on Y306. A phosphoserine mark is found at S308 and S443.

The protein belongs to the 11S seed storage protein (globulins) family. Heterohexamer; each subunit is composed of an acidic and a basic chain derived from a single precursor and linked by a disulfide bond.

It is found in the rough endoplasmic reticulum. Its function is as follows. This is a seed storage protein. This is Cruciferin CRU4 (CRU4) from Brassica napus (Rape).